The following is a 332-amino-acid chain: L-lactate dehydrogenase A chain (332 aa).

Position 2 is an N-acetylalanine (A2). Residue K5 is modified to N6-acetyllysine; alternate. Residue K5 is modified to N6-succinyllysine; alternate. K14 bears the N6-acetyllysine mark. T18 carries the post-translational modification Phosphothreonine. 29–57 (GAVGMACAISILMKDLADELALVDVIEDK) is a binding site for NAD(+). Position 57 is an N6-acetyllysine; alternate (K57). A Glycyl lysine isopeptide (Lys-Gly) (interchain with G-Cter in SUMO2); alternate cross-link involves residue K57. Position 81 is an N6-acetyllysine (K81). Position 99 (R99) interacts with NAD(+). R106 is a binding site for substrate. Residue K118 is modified to N6-acetyllysine; alternate. K118 bears the N6-succinyllysine; alternate mark. K126 bears the N6-acetyllysine mark. Residues N138 and R169 each contribute to the substrate site. Catalysis depends on H193, which acts as the Proton acceptor. N6-acetyllysine occurs at positions 224 and 232. Y239 is subject to Phosphotyrosine. An N6-acetyllysine modification is found at K243. T248 is a substrate binding site. At T309 the chain carries Phosphothreonine. At S310 the chain carries Phosphoserine. Residue K318 is modified to N6-acetyllysine; alternate. The residue at position 318 (K318) is an N6-succinyllysine; alternate. The residue at position 322 (T322) is a Phosphothreonine.

It belongs to the LDH/MDH superfamily. LDH family. Homotetramer. Interacts with PTEN upstream reading frame protein MP31. ISGylated.

It is found in the cytoplasm. The enzyme catalyses (S)-lactate + NAD(+) = pyruvate + NADH + H(+). It participates in fermentation; pyruvate fermentation to lactate; (S)-lactate from pyruvate: step 1/1. Its function is as follows. Interconverts simultaneously and stereospecifically pyruvate and lactate with concomitant interconversion of NADH and NAD(+). The chain is L-lactate dehydrogenase A chain (LDHA) from Pongo abelii (Sumatran orangutan).